The primary structure comprises 207 residues: BTB/POZ domain-containing protein At1g01640 (207 aa).

The BTB domain maps to 24–94; the sequence is TDVLVKPGEE…LYSGNLKAPY (71 aa).

In terms of assembly, interacts with CUL3A.

The protein operates within protein modification; protein ubiquitination. May act as a substrate-specific adapter of an E3 ubiquitin-protein ligase complex (CUL3-RBX1-BTB) which mediates the ubiquitination and subsequent proteasomal degradation of target proteins. In Arabidopsis thaliana (Mouse-ear cress), this protein is BTB/POZ domain-containing protein At1g01640.